The chain runs to 287 residues: Acetyl-coenzyme A carboxylase carboxyl transferase subunit beta (287 aa).

The CoA carboxyltransferase N-terminal domain occupies 25–287 (VWTKCSACEQ…KMLNTHVIEE (263 aa)). The Zn(2+) site is built by C29, C32, C48, and C51. Residues 29-51 (CSACEQVLYRAELERNLEVCPKC) form a C4-type zinc finger.

It belongs to the AccD/PCCB family. In terms of assembly, acetyl-CoA carboxylase is a heterohexamer composed of biotin carboxyl carrier protein (AccB), biotin carboxylase (AccC) and two subunits each of ACCase subunit alpha (AccA) and ACCase subunit beta (AccD). Zn(2+) is required as a cofactor.

It localises to the cytoplasm. The enzyme catalyses N(6)-carboxybiotinyl-L-lysyl-[protein] + acetyl-CoA = N(6)-biotinyl-L-lysyl-[protein] + malonyl-CoA. It functions in the pathway lipid metabolism; malonyl-CoA biosynthesis; malonyl-CoA from acetyl-CoA: step 1/1. Functionally, component of the acetyl coenzyme A carboxylase (ACC) complex. Biotin carboxylase (BC) catalyzes the carboxylation of biotin on its carrier protein (BCCP) and then the CO(2) group is transferred by the transcarboxylase to acetyl-CoA to form malonyl-CoA. In Aeromonas hydrophila subsp. hydrophila (strain ATCC 7966 / DSM 30187 / BCRC 13018 / CCUG 14551 / JCM 1027 / KCTC 2358 / NCIMB 9240 / NCTC 8049), this protein is Acetyl-coenzyme A carboxylase carboxyl transferase subunit beta.